A 160-amino-acid polypeptide reads, in one-letter code: Flavodoxin (160 aa).

A Flavodoxin-like domain is found at 3 to 153 (ISILYSSKTG…NARIFGERIA (151 aa)).

It belongs to the flavodoxin family. FMN serves as cofactor.

Its function is as follows. Low-potential electron donor to a number of redox enzymes. The protein is Flavodoxin (floX) of Clostridium saccharobutylicum.